Consider the following 1074-residue polypeptide: Telomerase reverse transcriptase (1074 aa).

Residues 240–265 are disordered; that stretch reads DKVSCETMQDGESGKTTLVQKQPGSK. Over residues 253–262 the composition is skewed to polar residues; sequence GKTTLVQKQP. Residues 300 to 305 carry the TFLY; involved in RNA binding motif; it reads TLGFLY. 2 interaction with RNA template regions span residues 355–360 and 461–486; these read LPRRFF and WKIKVNNCDWLKISKTGRVPPSELSY. The Reverse transcriptase domain maps to 552–877; it reads TPDQVAALPK…CLFPWCGLLL (326 aa). Residues D649, D810, and D811 each contribute to the Mg(2+) site.

It belongs to the reverse transcriptase family. Telomerase subfamily. In terms of assembly, catalytic subunit of the telomerase holoenzyme complex composed minimally of TERT and the telomerase RNA template component (TERC). In terms of tissue distribution, detected at highest levels in gill, ovary and testis, and at lower levels in brain, eye, heart, skin, spleen and stomach.

Its subcellular location is the nucleus. The protein localises to the chromosome. It localises to the telomere. The enzyme catalyses DNA(n) + a 2'-deoxyribonucleoside 5'-triphosphate = DNA(n+1) + diphosphate. In terms of biological role, telomerase is a ribonucleoprotein enzyme essential for the replication of chromosome termini in most eukaryotes. It elongates telomeres. It is a reverse transcriptase that adds simple sequence repeats to chromosome ends by copying a template sequence within the RNA component of the enzyme. The polypeptide is Telomerase reverse transcriptase (Takifugu rubripes (Japanese pufferfish)).